A 334-amino-acid polypeptide reads, in one-letter code: Tryptophan--tRNA ligase (334 aa).

ATP-binding positions include 11-13 and 19-20; these read QPS and GN. The 'HIGH' region motif lies at 12 to 20; sequence PSGELTIGN. Asp135 contributes to the L-tryptophan binding site. ATP is bound by residues 147-149, Val186, and 195-199; these read GED and KMSKS. A 'KMSKS' region motif is present at residues 195-199; the sequence is KMSKS.

Belongs to the class-I aminoacyl-tRNA synthetase family. As to quaternary structure, homodimer.

It is found in the cytoplasm. It catalyses the reaction tRNA(Trp) + L-tryptophan + ATP = L-tryptophyl-tRNA(Trp) + AMP + diphosphate + H(+). Catalyzes the attachment of tryptophan to tRNA(Trp). This chain is Tryptophan--tRNA ligase, found in Klebsiella aerogenes (Enterobacter aerogenes).